Consider the following 248-residue polypeptide: DNA-directed RNA polymerase subunit Rpo3 (248 aa).

The protein belongs to the archaeal Rpo3/eukaryotic RPB3 RNA polymerase subunit family. As to quaternary structure, part of the RNA polymerase complex.

It localises to the cytoplasm. It carries out the reaction RNA(n) + a ribonucleoside 5'-triphosphate = RNA(n+1) + diphosphate. DNA-dependent RNA polymerase (RNAP) catalyzes the transcription of DNA into RNA using the four ribonucleoside triphosphates as substrates. The sequence is that of DNA-directed RNA polymerase subunit Rpo3 from Halobacterium salinarum (strain ATCC 29341 / DSM 671 / R1).